The sequence spans 299 residues: Peroxisomal biogenesis factor 19 (299 aa).

Ala-2 bears the N-acetylalanine mark. The docking to the peroxisome membrane and binding to PEX3 stretch occupies residues 2–56 (AAAEGGCGAGVEADRELEELLESALDDFDKAKPSPAPSPTISAPDASGPQKRSPG). The necessary for PEX19 function on peroxisome biogenesis stretch occupies residues 2–91 (AAAEGGCGAG…QATAEFEKAM (90 aa)). The interval 25–63 (ALDDFDKAKPSPAPSPTISAPDASGPQKRSPGDTAKDAL) is disordered. Ser-35, Ser-39, Ser-54, and Ser-66 each carry phosphoserine. Thr-236 carries the phosphothreonine modification. The residue at position 296 (Cys-296) is a Cysteine methyl ester. Cys-296 is lipidated: S-farnesyl cysteine. Positions 297–299 (LIM) are cleaved as a propeptide — removed in mature form.

Belongs to the peroxin-19 family. In terms of assembly, interacts with a broad range of peroxisomal membrane proteins, including PEX3, PEX10, PEX11A, PEX11B, PEX12, PEX13, PEX14 and PEX16, PXMP2/PMP22, PXMP4/PMP24, SLC25A17/PMP34, ABCD1/ALDP, ABCD2/ALDRP, and ABCD3/PMP70. Also interacts with the tumor suppressor CDKN2A/p19ARF.

Its subcellular location is the cytoplasm. The protein localises to the peroxisome membrane. Functionally, necessary for early peroxisomal biogenesis. Acts both as a cytosolic chaperone and as an import receptor for peroxisomal membrane proteins (PMPs). Binds and stabilizes newly synthesized PMPs in the cytoplasm by interacting with their hydrophobic membrane-spanning domains, and targets them to the peroxisome membrane by binding to the integral membrane protein PEX3. Excludes CDKN2A from the nucleus and prevents its interaction with MDM2, which results in active degradation of TP53. This is Peroxisomal biogenesis factor 19 (Pex19) from Rattus norvegicus (Rat).